Reading from the N-terminus, the 170-residue chain is Envelope protein 168 (170 aa).

A topological domain (intravirion) is located at residue Met-1. The chain crosses the membrane as a helical span at residues 2 to 22 (FYPVVQILIGIILVIILILGF). Residues 23–170 (YHLKRKPPKK…TVMGIARNVL (148 aa)) are Virion surface-facing.

The protein belongs to the asfivirus envelope protein p22 family.

It is found in the virion membrane. Its subcellular location is the host cell membrane. This is Envelope protein 168 from African swine fever virus (isolate Tick/South Africa/Pretoriuskop Pr4/1996) (ASFV).